A 329-amino-acid polypeptide reads, in one-letter code: DNA-directed RNA polymerase subunit alpha (329 aa).

Residues 1–235 form an alpha N-terminal domain (alpha-NTD) region; sequence MQGSVTEFLK…EQLEAFVDLR (235 aa). The tract at residues 249 to 329 is alpha C-terminal domain (alpha-CTD); that stretch reads FDPILLRPVD…NWPPASIADE (81 aa).

The protein belongs to the RNA polymerase alpha chain family. As to quaternary structure, homodimer. The RNAP catalytic core consists of 2 alpha, 1 beta, 1 beta' and 1 omega subunit. When a sigma factor is associated with the core the holoenzyme is formed, which can initiate transcription.

The enzyme catalyses RNA(n) + a ribonucleoside 5'-triphosphate = RNA(n+1) + diphosphate. Its function is as follows. DNA-dependent RNA polymerase catalyzes the transcription of DNA into RNA using the four ribonucleoside triphosphates as substrates. This chain is DNA-directed RNA polymerase subunit alpha, found in Cronobacter sakazakii (strain ATCC BAA-894) (Enterobacter sakazakii).